Reading from the N-terminus, the 286-residue chain is Protein FAM87A (286 aa).

A run of 2 helical transmembrane segments spans residues 68–88 (YLHSSLFLSILFQVTLLETAL) and 161–181 (SFFVVFQAWSLMILQVLGDML).

This sequence belongs to the FAM87 family.

It is found in the membrane. This Homo sapiens (Human) protein is Protein FAM87A (FAM87A).